Reading from the N-terminus, the 584-residue chain is DNA ligase (584 aa).

Residue glutamate 249 coordinates ATP. The N6-AMP-lysine intermediate role is filled by lysine 251. Positions 256, 271, 301, 341, 416, and 422 each coordinate ATP.

Belongs to the ATP-dependent DNA ligase family. Requires Mg(2+) as cofactor.

The catalysed reaction is ATP + (deoxyribonucleotide)n-3'-hydroxyl + 5'-phospho-(deoxyribonucleotide)m = (deoxyribonucleotide)n+m + AMP + diphosphate.. In terms of biological role, DNA ligase that seals nicks in double-stranded DNA during DNA replication, DNA recombination and DNA repair. The protein is DNA ligase of Pyrobaculum arsenaticum (strain DSM 13514 / JCM 11321 / PZ6).